A 355-amino-acid polypeptide reads, in one-letter code: cGAMP-activated phospholipase (355 aa).

Residues Leu17–Leu214 form the PNPLA domain. Residues Gly21–Gly26 carry the GXGXXG motif. Positions Gly60 to Gly64 match the GXSXG motif. Ser62 functions as the Nucleophile in the catalytic mechanism. Asp201 acts as the Proton acceptor in catalysis. The short motif at Asp201–Gly203 is the DGA/G element.

Belongs to the patatin family.

The catalysed reaction is a 1,2-diacyl-sn-glycero-3-phosphocholine + H2O = a 2-acyl-sn-glycero-3-phosphocholine + a fatty acid + H(+). It catalyses the reaction 1,2-di-(9Z-octadecenoyl)-sn-glycero-3-phosphoethanolamine + 2 H2O = sn-glycero-3-phosphoethanolamine + 2 (9Z)-octadecenoate + 2 H(+). With respect to regulation, phospholipase activity is specifically activated upon 3',3'-cGAMP (cGAMP) binding. Is not activated by the other cyclic dinucleotides 3',3'-cUAMP, 3',3'-c-diAMP and 3',3'-c-diGMP. Therefore, is specifically activated by only the nucleotide synthesized from its adjacently encoded nucleotidyltransferase (DncV). The cGAMP-activation of lipase is inhibited by T4 phage protein Acb2 (Vs.4). Effector phospholipase of a CBASS antiviral system. CBASS (cyclic oligonucleotide-based antiphage signaling system) provides immunity against bacteriophages. The CD-NTase protein (DncV) synthesizes cyclic nucleotides in response to infection; these serve as specific second messenger signals. The signals activate a diverse range of effectors, leading to bacterial cell death and thus abortive phage infection. A type II-A(GA) CBASS system. In terms of biological role, phospholipase that is activated upon binding to the cyclic dinucleotide (CDN) second messenger 3',3'-cyclic GMP-AMP (3',3'-cGAMP). Then degrades phosphatidylethanolamine (PE) and phosphatidylglycerol (PG), the major phospholipids in the cell membrane of V.cholerae, releasing 16:1 and 18:1 free fatty acids. Upon expression in E.coli with cognate DncV, the cell inner membrane shrinks and separates from the cell wall. Functionally, protects E.coli against phage infection. When the CBASS operon (capV-dncV-cap2-cap3) is introduced in E.coli MG1655 there is about 100-fold protection against phages P1 and T2. When the operon is introduced in E.coli MG1655 there is a more than 10(3) decrease in the efficiency of T2 plaque formation. Protects 100-fold against phage T5, offers no protection against T7. When the operon is introduced in E.coli MG1655 it protects against phages T2, T4, T5 and T6. Another paper shows the operon confers protection against phages P1, T2, T5 and T6 but not T4 or lambda. This Vibrio cholerae serotype O1 (strain ATCC 39315 / El Tor Inaba N16961) protein is cGAMP-activated phospholipase.